The following is a 254-amino-acid chain: Thiazole synthase (254 aa).

Catalysis depends on Lys-95, which acts as the Schiff-base intermediate with DXP. 1-deoxy-D-xylulose 5-phosphate is bound by residues Gly-156, 182–183, and 204–205; these read AG and NT.

It belongs to the ThiG family. As to quaternary structure, homotetramer. Forms heterodimers with either ThiH or ThiS.

Its subcellular location is the cytoplasm. It carries out the reaction [ThiS sulfur-carrier protein]-C-terminal-Gly-aminoethanethioate + 2-iminoacetate + 1-deoxy-D-xylulose 5-phosphate = [ThiS sulfur-carrier protein]-C-terminal Gly-Gly + 2-[(2R,5Z)-2-carboxy-4-methylthiazol-5(2H)-ylidene]ethyl phosphate + 2 H2O + H(+). Its pathway is cofactor biosynthesis; thiamine diphosphate biosynthesis. Its function is as follows. Catalyzes the rearrangement of 1-deoxy-D-xylulose 5-phosphate (DXP) to produce the thiazole phosphate moiety of thiamine. Sulfur is provided by the thiocarboxylate moiety of the carrier protein ThiS. In vitro, sulfur can be provided by H(2)S. This is Thiazole synthase from Vibrio atlanticus (strain LGP32) (Vibrio splendidus (strain Mel32)).